Here is a 575-residue protein sequence, read N- to C-terminus: Alpha-(1,6)-fucosyltransferase (575 aa).

Topologically, residues 1 to 9 (MRPWTGSWR) are cytoplasmic. Residues 10 to 30 (WIMLILFAWGTLLFYIGGHLV) traverse the membrane as a helical; Signal-anchor for type II membrane protein segment. Residues 31-575 (RDNDHPDHSS…KYPTYPEAEK (545 aa)) lie on the Lumenal side of the membrane. Disulfide bonds link Cys204–Cys266, Cys212–Cys230, and Cys218–Cys222. In terms of domain architecture, GT23 spans 206 to 493 (KAKKLVCNIN…PDASANFHSL (288 aa)). Ser278 carries the phosphoserine modification. Residues 299-305 (PRPPYLP) carry the SH3-binding motif. Positions 365–366 (RR) are important for donor substrate binding. An intrachain disulfide couples Cys465 to Cys472. An SH3 domain is found at 502 to 563 (QNAHNQIAIY…PSYKVREKIE (62 aa)).

It belongs to the glycosyltransferase 23 family. Tyrosine phosphorylated by PKDCC/VLK.

It localises to the golgi apparatus. The protein resides in the golgi stack membrane. It carries out the reaction N(4)-{beta-D-GlcNAc-(1-&gt;2)-alpha-D-Man-(1-&gt;3)-[beta-D-GlcNAc-(1-&gt;2)-alpha-D-Man-(1-&gt;6)]-beta-D-Man-(1-&gt;4)-beta-D-GlcNAc-(1-&gt;4)-beta-D-GlcNAc}-L-asparaginyl-[protein] + GDP-beta-L-fucose = an N(4)-{beta-D-GlcNAc-(1-&gt;2)-alpha-D-Man-(1-&gt;3)-[beta-D-GlcNAc-(1-&gt;2)-alpha-D-Man-(1-&gt;6)]-beta-D-Man-(1-&gt;4)-beta-D-GlcNAc-(1-&gt;4)-[alpha-L-Fuc-(1-&gt;6)]-beta-D-GlcNAc}-L-asparaginyl-[protein] + GDP + H(+). Its pathway is protein modification; protein glycosylation. Its function is as follows. Catalyzes the addition of fucose in alpha 1-6 linkage to the first GlcNAc residue, next to the peptide chains in N-glycans. The polypeptide is Alpha-(1,6)-fucosyltransferase (FUT8) (Canis lupus familiaris (Dog)).